A 220-amino-acid chain; its full sequence is EXFRDVNKQDVLLFIDNILRSVQAGSEVSALLGRMPSAVGYQPTLSTEMGSLQERITSTKEGSITSIQAVYVPADDSTDPAPATTFAHPDATTVLPRGLAAKGIYPAVDPLDPTPTMLQPWIVGEEHYETAQGVKQTLQRYKEPQDIIAILGLDELSEEDRLTVARARKIERFLSQPFFVAEVFTGSPGKYVSPIETIKGFQMILSGELDSLPEQAFYLV.

It belongs to the ATPase alpha/beta chains family. In terms of assembly, F-type ATPases have 2 components, CF(1) - the catalytic core - and CF(0) - the membrane proton channel. CF(1) has five subunits: alpha(3), beta(3), gamma(1), delta(1), epsilon(1). CF(0) has four main subunits: a(1), b(1), b'(1) and c(9-12).

It is found in the plastid. Its subcellular location is the chloroplast thylakoid membrane. The enzyme catalyses ATP + H2O + 4 H(+)(in) = ADP + phosphate + 5 H(+)(out). Produces ATP from ADP in the presence of a proton gradient across the membrane. The catalytic sites are hosted primarily by the beta subunits. The polypeptide is ATP synthase subunit beta, chloroplastic (atpB) (Osmundastrum cinnamomeum (Cinnamon fern)).